Consider the following 256-residue polypeptide: Thiazole synthase (256 aa).

K95 (schiff-base intermediate with DXP) is an active-site residue. Residues G156, 182–183 (AG), and 204–205 (NT) each bind 1-deoxy-D-xylulose 5-phosphate.

It belongs to the ThiG family. In terms of assembly, homotetramer. Forms heterodimers with either ThiH or ThiS.

It is found in the cytoplasm. The enzyme catalyses [ThiS sulfur-carrier protein]-C-terminal-Gly-aminoethanethioate + 2-iminoacetate + 1-deoxy-D-xylulose 5-phosphate = [ThiS sulfur-carrier protein]-C-terminal Gly-Gly + 2-[(2R,5Z)-2-carboxy-4-methylthiazol-5(2H)-ylidene]ethyl phosphate + 2 H2O + H(+). Its pathway is cofactor biosynthesis; thiamine diphosphate biosynthesis. Catalyzes the rearrangement of 1-deoxy-D-xylulose 5-phosphate (DXP) to produce the thiazole phosphate moiety of thiamine. Sulfur is provided by the thiocarboxylate moiety of the carrier protein ThiS. In vitro, sulfur can be provided by H(2)S. The sequence is that of Thiazole synthase from Escherichia coli O45:K1 (strain S88 / ExPEC).